A 482-amino-acid chain; its full sequence is Proline--tRNA ligase (482 aa).

Residues Thr-117, Glu-119, and Arg-148 each coordinate L-proline. Residues Arg-148, Glu-150, Gln-232, and Thr-235 each coordinate ATP. His-237 provides a ligand contact to L-proline. Ser-269 lines the ATP pocket. The interval 346-376 (EMRGVPLRVEIGPRDLEKGAAVISRRDTGEK) is interaction with tRNA. Zn(2+)-binding residues include Cys-436, Cys-441, Cys-464, and Cys-467.

Belongs to the class-II aminoacyl-tRNA synthetase family. ProS type 3 subfamily. In terms of assembly, homodimer. The dimer is functionally asymmetric: only one of the two active sites at a time is able to form prolyl-adenylate, and only one tRNA molecule binds per dimer. Interacts with LeuRS, which enhances tRNA(Pro) aminoacylation.

Its subcellular location is the cytoplasm. It catalyses the reaction tRNA(Pro) + L-proline + ATP = L-prolyl-tRNA(Pro) + AMP + diphosphate. Catalyzes the attachment of proline to tRNA(Pro) in a two-step reaction: proline is first activated by ATP to form Pro-AMP and then transferred to the acceptor end of tRNA(Pro). Can inadvertently accommodate and process cysteine. This is Proline--tRNA ligase (proS) from Methanothermobacter thermautotrophicus (strain ATCC 29096 / DSM 1053 / JCM 10044 / NBRC 100330 / Delta H) (Methanobacterium thermoautotrophicum).